The chain runs to 182 residues: Ribosome maturation factor RimM (182 aa).

Residues glutamate 102 to phenylalanine 182 enclose the PRC barrel domain.

The protein belongs to the RimM family. Binds ribosomal protein uS19.

It localises to the cytoplasm. Its function is as follows. An accessory protein needed during the final step in the assembly of 30S ribosomal subunit, possibly for assembly of the head region. Essential for efficient processing of 16S rRNA. May be needed both before and after RbfA during the maturation of 16S rRNA. It has affinity for free ribosomal 30S subunits but not for 70S ribosomes. The sequence is that of Ribosome maturation factor RimM from Yersinia pseudotuberculosis serotype IB (strain PB1/+).